Reading from the N-terminus, the 917-residue chain is MLX-interacting protein (917 aa).

The tract at residues 1-72 is disordered; that stretch reads MAADVFMCSP…AGPGREEPPR (72 aa). An N-acetylalanine modification is found at A2. Residues S9, S33, and S39 each carry the phosphoserine modification. Acidic residues predominate over residues 27 to 37; it reads PEDDDDSDTDE. Residues 47-57 show a composition bias toward low complexity; the sequence is ATSARAHASAA. Residues 73–327 are required for cytoplasmic localization; it reads RQQIIHSGHF…PLQPNLDFMD (255 aa). The transactivation domain stretch occupies residues 322 to 445; it reads NLDFMDTFEP…LLSPGPAPAP (124 aa). Disordered stretches follow at residues 347–402 and 632–711; these read LPPP…CERT and SHST…TDPK. The segment covering 378–388 has biased composition (polar residues); it reads LPNSLITSSAA. Residues 632 to 643 are compositionally biased toward low complexity; sequence SHSTSSQPSPVS. S667 carries the phosphoserine modification. Over residues 670–685 the composition is skewed to polar residues; it reads VPATGSSRDCPNSGQA. The span at 686 to 704 shows a compositional bias: low complexity; it reads SPCPSEQSPSPQSPQNNCS. The bHLH domain occupies 717-767; sequence KNRQKHISAEQKRRFNIRMGFNTLNSLISNNSKQTSHAITLQKTMEYITKL. Residues 767-788 form a leucine-zipper region; it reads LQQERMQMQEEARRLREEIEEL. The interval 830–879 is mediates heterotypic interactions between MLXIP and MLX and is required for cytoplasmic localization; it reads WKFWIFSMIIKPLFESFKGMVSTSSLEEFHRTALSWLDQHCSLPVLRPMV. Residues 897 to 917 form a disordered region; sequence SQLPEQASEAVTRMGKRSGES.

As to quaternary structure, efficient DNA binding requires dimerization with another bHLH protein. Binds DNA as a homodimer or a heterodimer with MLX/TCFL4.

The protein localises to the cytoplasm. It is found in the nucleus. It localises to the mitochondrion outer membrane. In terms of biological role, binds DNA as a heterodimer with MLX/TCFL4 and activates transcription. Binds to the canonical E box sequence 5'-CACGTG-3'. Plays a role in transcriptional activation of glycolytic target genes. Involved in glucose-responsive gene regulation. Regulates transcription in response to changes in cellular carbohydrate abundance such as occurs during fasting to feeding metabolic transition. Refeeding stimulates MLXIPL/ChREBP transcription factor, leading to increased BCKDK to PPM1K expression ratio, phosphorylation and activation of ACLY that ultimately results in the generation of malonyl-CoA and oxaloacetate immediate substrates of de novo lipogenesis and gluconeogenesis, respectively. The protein is MLX-interacting protein of Mus musculus (Mouse).